Reading from the N-terminus, the 127-residue chain is Small ribosomal subunit protein uS11 (127 aa).

The protein belongs to the universal ribosomal protein uS11 family. As to quaternary structure, part of the 30S ribosomal subunit. Interacts with proteins S7 and S18. Binds to IF-3.

Located on the platform of the 30S subunit, it bridges several disparate RNA helices of the 16S rRNA. Forms part of the Shine-Dalgarno cleft in the 70S ribosome. This chain is Small ribosomal subunit protein uS11, found in Chlorobium chlorochromatii (strain CaD3).